Consider the following 111-residue polypeptide: Large ribosomal subunit protein uL22 (111 aa).

Belongs to the universal ribosomal protein uL22 family. In terms of assembly, part of the 50S ribosomal subunit.

Its function is as follows. This protein binds specifically to 23S rRNA; its binding is stimulated by other ribosomal proteins, e.g. L4, L17, and L20. It is important during the early stages of 50S assembly. It makes multiple contacts with different domains of the 23S rRNA in the assembled 50S subunit and ribosome. The globular domain of the protein is located near the polypeptide exit tunnel on the outside of the subunit, while an extended beta-hairpin is found that lines the wall of the exit tunnel in the center of the 70S ribosome. This is Large ribosomal subunit protein uL22 from Clostridium perfringens (strain ATCC 13124 / DSM 756 / JCM 1290 / NCIMB 6125 / NCTC 8237 / Type A).